Here is a 442-residue protein sequence, read N- to C-terminus: D-serine dehydratase (442 aa).

Lysine 118 is subject to N6-(pyridoxal phosphate)lysine.

The protein belongs to the serine/threonine dehydratase family. DsdA subfamily. Monomer. It depends on pyridoxal 5'-phosphate as a cofactor.

The catalysed reaction is D-serine = pyruvate + NH4(+). The polypeptide is D-serine dehydratase (Escherichia coli O6:H1 (strain CFT073 / ATCC 700928 / UPEC)).